The chain runs to 639 residues: Protein P1 (639 aa).

Positions 1-20 (MNRFTAYAALFFMFSLCSTA) are cleaved as a signal peptide. 3 helical membrane passes run 121-141 (AASV…WTLA), 144-164 (ITLF…LGCI), and 172-192 (ALSL…KIIW). One can recognise a Peptidase S39 domain in the interval 207-399 (VEGYKGFSVP…GITSPNYVFE (193 aa)). Residues H255, D286, and S354 each act as for protease activity in the active site. Disordered stretches follow at residues 455–515 (ATNA…PPMD) and 539–639 (VSRV…NSKA). Over residues 463–488 (TAQTNSAEKTAPSTSAEKTALTNKPL) the composition is skewed to polar residues. Basic residues predominate over residues 548 to 561 (QKPKQKKRGRRGGK). Residues 566 to 577 (SLPPTSTQSTSG) show a composition bias toward polar residues. Low complexity predominate over residues 587-602 (ASGSAGTSRATTTPAP).

Belongs to the peptidase S39B family. Specific enzymatic cleavages in vivo yield mature proteins. The protease probably cleaves itself and releases the VPg protein. The VPg protein is probably further cleaved in its C-terminus.

It localises to the membrane. Precursor from which the VPg molecule is probably released at the onset of the RNA synthesis. Essential for virus replication. Participates, together with the proteins P0 and P7, in the inhibition of the induction of aphid-induced host phytohormones. This could play a role in the attraction to the infected plants by aphids. This Solanum tuberosum (Potato) protein is Protein P1.